Here is a 505-residue protein sequence, read N- to C-terminus: Putative F-box protein At1g58310 (505 aa).

Residues 7–55 (RDIISGLPDSLLCHILSFLNTKEAASTSVLAKKWRYLFASVPNLDFDDS) form the F-box domain.

In Arabidopsis thaliana (Mouse-ear cress), this protein is Putative F-box protein At1g58310.